Consider the following 226-residue polypeptide: 2,3-bisphosphoglycerate-dependent phosphoglycerate mutase (226 aa).

Residues 8–15 (RHGQSVWN), 21–22 (TG), R58, 109–112 (ERMY), K120, 136–137 (RR), and 180–181 (GN) contribute to the substrate site. H9 functions as the Tele-phosphohistidine intermediate in the catalytic mechanism. E109 (proton donor/acceptor) is an active-site residue.

It belongs to the phosphoglycerate mutase family. BPG-dependent PGAM subfamily.

The enzyme catalyses (2R)-2-phosphoglycerate = (2R)-3-phosphoglycerate. It participates in carbohydrate degradation; glycolysis; pyruvate from D-glyceraldehyde 3-phosphate: step 3/5. Catalyzes the interconversion of 2-phosphoglycerate and 3-phosphoglycerate. In Chlamydia trachomatis serovar L2b (strain UCH-1/proctitis), this protein is 2,3-bisphosphoglycerate-dependent phosphoglycerate mutase.